We begin with the raw amino-acid sequence, 199 residues long: Nuclear transcription factor Y subunit C-2 (199 aa).

This sequence belongs to the NFYC/HAP5 subunit family. In terms of assembly, heterotrimeric transcription factor composed of three components, NF-YA, NF-YB and NF-YC. NF-YB and NF-YC must interact and dimerize for NF-YA association and DNA binding. Interacts with HTT1 in both cytoplasm and nucleus. As to expression, ubiquitous.

It is found in the nucleus. The protein resides in the cytoplasm. Its function is as follows. Stimulates the transcription of various genes by recognizing and binding to a CCAAT motif in promoters. In Arabidopsis thaliana (Mouse-ear cress), this protein is Nuclear transcription factor Y subunit C-2 (NFYC2).